The following is a 392-amino-acid chain: S-adenosylmethionine synthase (392 aa).

An ATP-binding site is contributed by histidine 20. Aspartate 22 provides a ligand contact to Mg(2+). Glutamate 48 lines the K(+) pocket. L-methionine is bound by residues glutamate 61 and glutamine 106. Positions 106 to 116 (QSRDIINAIEK) are flexible loop. ATP-binding positions include 171–173 (DSK), aspartate 248, 254–255 (RK), alanine 271, and lysine 275. Aspartate 248 serves as a coordination point for L-methionine. Residue lysine 279 coordinates L-methionine.

It belongs to the AdoMet synthase family. In terms of assembly, homotetramer; dimer of dimers. Mg(2+) is required as a cofactor. It depends on K(+) as a cofactor.

Its subcellular location is the cytoplasm. It catalyses the reaction L-methionine + ATP + H2O = S-adenosyl-L-methionine + phosphate + diphosphate. Its pathway is amino-acid biosynthesis; S-adenosyl-L-methionine biosynthesis; S-adenosyl-L-methionine from L-methionine: step 1/1. Catalyzes the formation of S-adenosylmethionine (AdoMet) from methionine and ATP. The overall synthetic reaction is composed of two sequential steps, AdoMet formation and the subsequent tripolyphosphate hydrolysis which occurs prior to release of AdoMet from the enzyme. The chain is S-adenosylmethionine synthase from Borreliella afzelii (strain PKo) (Borrelia afzelii).